Here is a 383-residue protein sequence, read N- to C-terminus: S-adenosylmethionine synthase (383 aa).

His15 serves as a coordination point for ATP. Residue Asp17 coordinates Mg(2+). Glu43 contributes to the K(+) binding site. L-methionine contacts are provided by Glu56 and Gln99. Residues 99–109 (QSPDINQGVDR) form a flexible loop region. ATP is bound by residues 164 to 166 (DAK), 230 to 231 (RF), Asp239, 245 to 246 (RK), Ala262, and Lys266. Asp239 contributes to the L-methionine binding site. Position 270 (Lys270) interacts with L-methionine.

Belongs to the AdoMet synthase family. As to quaternary structure, homotetramer; dimer of dimers. Mg(2+) is required as a cofactor. The cofactor is K(+).

The protein resides in the cytoplasm. It carries out the reaction L-methionine + ATP + H2O = S-adenosyl-L-methionine + phosphate + diphosphate. Its pathway is amino-acid biosynthesis; S-adenosyl-L-methionine biosynthesis; S-adenosyl-L-methionine from L-methionine: step 1/1. Functionally, catalyzes the formation of S-adenosylmethionine (AdoMet) from methionine and ATP. The overall synthetic reaction is composed of two sequential steps, AdoMet formation and the subsequent tripolyphosphate hydrolysis which occurs prior to release of AdoMet from the enzyme. The sequence is that of S-adenosylmethionine synthase from Pseudoalteromonas translucida (strain TAC 125).